A 90-amino-acid chain; its full sequence is Large ribosomal subunit protein uL23c (90 aa).

It belongs to the universal ribosomal protein uL23 family. In terms of assembly, part of the 50S ribosomal subunit.

Its subcellular location is the plastid. It is found in the chloroplast. Its function is as follows. Binds to 23S rRNA. The sequence is that of Large ribosomal subunit protein uL23c (rpl23) from Oltmannsiellopsis viridis (Marine flagellate).